The primary structure comprises 200 residues: ATP-dependent Clp protease proteolytic subunit (200 aa).

The active-site Nucleophile is the S98. H123 is a catalytic residue.

This sequence belongs to the peptidase S14 family. In terms of assembly, fourteen ClpP subunits assemble into 2 heptameric rings which stack back to back to give a disk-like structure with a central cavity, resembling the structure of eukaryotic proteasomes.

Its subcellular location is the cytoplasm. The enzyme catalyses Hydrolysis of proteins to small peptides in the presence of ATP and magnesium. alpha-casein is the usual test substrate. In the absence of ATP, only oligopeptides shorter than five residues are hydrolyzed (such as succinyl-Leu-Tyr-|-NHMec, and Leu-Tyr-Leu-|-Tyr-Trp, in which cleavage of the -Tyr-|-Leu- and -Tyr-|-Trp bonds also occurs).. In terms of biological role, cleaves peptides in various proteins in a process that requires ATP hydrolysis. Has a chymotrypsin-like activity. Plays a major role in the degradation of misfolded proteins. The polypeptide is ATP-dependent Clp protease proteolytic subunit (Ehrlichia canis (strain Jake)).